We begin with the raw amino-acid sequence, 254 residues long: Imidazole glycerol phosphate synthase subunit HisF (254 aa).

Catalysis depends on residues Asp12 and Asp131.

This sequence belongs to the HisA/HisF family. In terms of assembly, heterodimer of HisH and HisF.

Its subcellular location is the cytoplasm. It carries out the reaction 5-[(5-phospho-1-deoxy-D-ribulos-1-ylimino)methylamino]-1-(5-phospho-beta-D-ribosyl)imidazole-4-carboxamide + L-glutamine = D-erythro-1-(imidazol-4-yl)glycerol 3-phosphate + 5-amino-1-(5-phospho-beta-D-ribosyl)imidazole-4-carboxamide + L-glutamate + H(+). Its pathway is amino-acid biosynthesis; L-histidine biosynthesis; L-histidine from 5-phospho-alpha-D-ribose 1-diphosphate: step 5/9. IGPS catalyzes the conversion of PRFAR and glutamine to IGP, AICAR and glutamate. The HisF subunit catalyzes the cyclization activity that produces IGP and AICAR from PRFAR using the ammonia provided by the HisH subunit. This is Imidazole glycerol phosphate synthase subunit HisF from Leuconostoc mesenteroides subsp. mesenteroides (strain ATCC 8293 / DSM 20343 / BCRC 11652 / CCM 1803 / JCM 6124 / NCDO 523 / NBRC 100496 / NCIMB 8023 / NCTC 12954 / NRRL B-1118 / 37Y).